Reading from the N-terminus, the 420-residue chain is RING finger protein 39 (420 aa).

An RING-type zinc finger spans residues 88–135 (CPLCGGSFEDPVLLACEHSFCRACLARRWGTPPATDTEASPTACPCCG). 2 disordered regions span residues 166 to 186 (PGAR…CLDP) and 246 to 265 (DRRS…DGPK). A B30.2/SPRY domain is found at 210–420 (DDLPEDYPVV…APLRIVPAES (211 aa)).

The protein localises to the cytoplasm. It carries out the reaction S-ubiquitinyl-[E2 ubiquitin-conjugating enzyme]-L-cysteine + [acceptor protein]-L-lysine = [E2 ubiquitin-conjugating enzyme]-L-cysteine + N(6)-ubiquitinyl-[acceptor protein]-L-lysine.. The protein operates within protein modification; protein ubiquitination. Functionally, plays an inhibitory role in anti-RNA viral innate immunity by targeting the adapter DDX3X and promoting its 'Lys-48'-linked polyubiquitination. Alternatively, enhances the cGAS-STING pathway activation by promoting 'Lys-63'-linked ubiquitination of STING1, facilitating the STING1-TBK1 complex formation and STING1 activation. The polypeptide is RING finger protein 39 (RNF39) (Macaca mulatta (Rhesus macaque)).